Here is an 80-residue protein sequence, read N- to C-terminus: Large ribosomal subunit protein bL28 (80 aa).

The interval 1 to 23 (MARVCQITGKKTRTGNNVSHANN) is disordered.

It belongs to the bacterial ribosomal protein bL28 family.

This is Large ribosomal subunit protein bL28 from Cytophaga hutchinsonii (strain ATCC 33406 / DSM 1761 / CIP 103989 / NBRC 15051 / NCIMB 9469 / D465).